Reading from the N-terminus, the 295-residue chain is Deleted in azoospermia-like (295 aa).

Residues 1–10 (MSTANPETPN) are compositionally biased toward polar residues. The interval 1-25 (MSTANPETPNSTISREASTQSSSAA) is disordered. The segment covering 11-25 (STISREASTQSSSAA) has biased composition (low complexity). The 76-residue stretch at 40–115 (NTVFVGGIDV…KKLKLGPAIR (76 aa)) folds into the RRM domain. The homodimerization stretch occupies residues 80–132 (KGYGFVSFFNDVDVQKIVESQINFHGKKLKLGPAIRKQNLCAYHVQPRPLVFN). The 24-residue stretch at 167–190 (AYPTYPNSPVQVITGYQLPVYNYQ) folds into the DAZ domain. Tyrosine 276 is subject to Phosphotyrosine.

The protein belongs to the RRM DAZ family. Homodimer and heterodimer. Multiple DAZL RRMs can bind to a single RNA containing multiple GUU triplets. Forms a heterodimer with DAZ. Interacts with BOLL, DAZAP1 and DAZAP2. Interacts with PUM2. In terms of tissue distribution, testis specific.

The protein resides in the cytoplasm. It is found in the nucleus. In terms of biological role, RNA-binding protein, which is essential for gametogenesis in both males and females. Plays a central role during spermatogenesis. Acts by binding to the 3'-UTR of mRNA, specifically recognizing GUU triplets, and thereby regulating the translation of key transcripts. The chain is Deleted in azoospermia-like (DAZL) from Homo sapiens (Human).